The chain runs to 324 residues: Short-chain dehydrogenase/reductase iacJ (324 aa).

Ile42, Lys66, Asp93, Asn120, Tyr204, Lys208, and Thr239 together coordinate NADP(+). Tyr204 (proton donor) is an active-site residue. Lys208 serves as the catalytic Lowers pKa of active site Tyr.

The protein belongs to the short-chain dehydrogenases/reductases (SDR) family.

It functions in the pathway secondary metabolite biosynthesis. Its function is as follows. Short-chain dehydrogenase/reductase; part of the gene cluster that mediates the biosynthesis of iso-A82775C, a enylepoxycyclohexane and biosynthetic precursor of the chloropestolide anticancer natural products. Within the cluster, the prenyltransferase iacE prenylates siccayne to generate pestalodiol E, using dimethylallyl diphosphate (DMAPP) as cosubstrate. The probable oxidoreductase iacF is then involved in the epoxidation of pestalodiol F to pestalodiol F, which is further converted to pestalofone A by the short-chain dehydrogenase/reductase iacG. Iso-A82775C is subsequently generated from pestalofone A by the short-chain dehydrogenase/reductase iacC. Iso-A82775C is further condensed with maldoxin via a Diels-Alder reaction to produce the anticancer natural products chloropestolides A to E. This is Short-chain dehydrogenase/reductase iacJ from Pestalotiopsis fici (strain W106-1 / CGMCC3.15140).